The primary structure comprises 445 residues: uncharacterized protein (445 aa).

His66 serves as a coordination point for Zn(2+). Glu69 (proton acceptor) is an active-site residue. 2 residues coordinate Zn(2+): His70 and Glu146. The tract at residues 232–251 (GRQSAPPRKSTGRINGGPAL) is disordered.

This sequence belongs to the peptidase M16 family. Zn(2+) serves as cofactor.

This is an uncharacterized protein from Mycobacterium leprae (strain TN).